The sequence spans 374 residues: MQQKCYYEILNVSKTASGVEIKRAYRKLAMEYHPDRNPGDKEAEIKFKEISEAYEILSDDSKRSRYDQFGHAGVNQQSGFGGTGGFGGFEDIFDTFFGGGTSRGSNRSRASRGSDLEYTLEITLEEAFFGVEKEITIPRMESCDSCDGTGSKSRSKTTCHACHGQGTIRRQQGFFAFEQTCPVCNGTGYSITDPCDACYGNGKVKKQKTLKVKIPEGVDNGDRIRLQGEGDSGSNGAMNGDLYVQIIIKEHKIFERRDINLYCEMPISFTKACLGGDIKVPTLDGEVVLKVVPETQTGKVFRLREKGMKSLRGHRRGDLLCKVVVETPVNLSAEQKELLEKFADSLGEDYQSKHAPKSKTWFDNVKDYAKKFFE.

Residues 5-70 (CYYEILNVSK…SKRSRYDQFG (66 aa)) form the J domain. The segment at 130–207 (GVEKEITIPR…CYGNGKVKKQ (78 aa)) adopts a CR-type zinc-finger fold. Positions 143, 146, 159, 162, 181, 184, 195, and 198 each coordinate Zn(2+). CXXCXGXG motif repeat units follow at residues 143–150 (CDSCDGTG), 159–166 (CHACHGQG), 181–188 (CPVCNGTG), and 195–202 (CDACYGNG).

It belongs to the DnaJ family. Homodimer. Zn(2+) is required as a cofactor.

It localises to the cytoplasm. Participates actively in the response to hyperosmotic and heat shock by preventing the aggregation of stress-denatured proteins and by disaggregating proteins, also in an autonomous, DnaK-independent fashion. Unfolded proteins bind initially to DnaJ; upon interaction with the DnaJ-bound protein, DnaK hydrolyzes its bound ATP, resulting in the formation of a stable complex. GrpE releases ADP from DnaK; ATP binding to DnaK triggers the release of the substrate protein, thus completing the reaction cycle. Several rounds of ATP-dependent interactions between DnaJ, DnaK and GrpE are required for fully efficient folding. Also involved, together with DnaK and GrpE, in the DNA replication of plasmids through activation of initiation proteins. This Francisella tularensis subsp. tularensis (strain FSC 198) protein is Chaperone protein DnaJ.